Reading from the N-terminus, the 249-residue chain is MIT domain-containing protein 1 (249 aa).

Residues 8 to 86 (QDPQSTAAAT…KYLDQEKEDG (79 aa)) enclose the MIT domain. The interval 168–231 (RGLQEIEESL…SLGYCDFDLR (64 aa)) is important for association with membranes.

As to quaternary structure, homodimer. Interacts (via MIT domain) with CHMP1A, CHMP1B, CHMP2A and IST1.

The protein localises to the late endosome membrane. It localises to the midbody. Its subcellular location is the membrane. Functionally, required for efficient abscission at the end of cytokinesis, together with components of the ESCRT-III complex. This chain is MIT domain-containing protein 1 (MITD1), found in Homo sapiens (Human).